The following is a 456-amino-acid chain: Cell adhesion molecule 1 (456 aa).

The first 47 residues, 1–47 (MASAVLPSGSQCAAAAAVAAAAAPPGLRLRLLLLLLSAAALIPTGDG), serve as a signal peptide directing secretion. The Ig-like V-type domain occupies 48–142 (QNLFTKDVTV…PPQESYTTIT (95 aa)). Over 48-388 (QNLFTKDVTV…EEGTIGAVDH (341 aa)) the chain is Extracellular. An intrachain disulfide couples cysteine 67 to cysteine 127. 4 N-linked (GlcNAc...) asparagine glycosylation sites follow: asparagine 70, asparagine 104, asparagine 116, and asparagine 168. 2 Ig-like C2-type domains span residues 147 to 241 (PRNL…RYLE) and 246 to 332 (PQVH…YMLY). Disulfide bonds link cysteine 169/cysteine 223 and cysteine 270/cysteine 316. 2 N-linked (GlcNAc...) asparagine glycosylation sites follow: asparagine 307 and asparagine 311. A helical membrane pass occupies residues 389–409 (AVIGGVVAVVVFAMLCLLIIL). Over 410–456 (GRYFARHKGTYFTHEAKGADDAADADTAIINAEGGQNNSEEKKEYFI) the chain is Cytoplasmic. The residue at position 436 (threonine 436) is a Phosphothreonine. The residue at position 448 (serine 448) is a Phosphoserine.

This sequence belongs to the nectin family. Homodimer (via Ig-like V-type domain). Interacts with FARP1. Interacts (via Ig-like V-type domain) with CRTAM (via Ig-like V-type domain); the interaction competes with CRTAM homodimerization and CADM1 homodimerization. Interacts (via C-terminus) with EPB41L3/DAL1. The interaction with EPB41L3/DAL1 may act to anchor CADM1 to the actin cytoskeleton. Interacts (via C-terminus) with MPP2 (via PDZ domain). Interacts (via C-terminus) with MPP3 (via PDZ domain); this interaction connects CADM1 with DLG1. Interacts (via C-terminus) with PALS2 (via PDZ domain). Post-translationally, N-glycosylated. In terms of processing, glycosylation at Asn-70 and Asn-104 promotes adhesive binding and synapse induction. As to expression, expressed dominantly in epithelial cells but not expressed in fibroblast cells (at protein level). Expressed in the T-cell area of lymph nodes, specifically in CD8+ and CD4- CD8- dendritic cells (at protein level). Expressed in CD8+ dendritic cells in the spleen (at protein level). Expressed in CD103+ dendritic cells in the small intestine lamina propria and mesenteric lymph nodes (at protein level). Expressed in brain, lung, kidney, testis, heart, spleen and liver, but not expressed in skeletal muscle.

It is found in the cell membrane. Its subcellular location is the synaptic cell membrane. In terms of biological role, mediates homophilic cell-cell adhesion in a Ca(2+)-independent manner. Also mediates heterophilic cell-cell adhesion with CADM3 and NECTIN3 in a Ca(2+)-independent manner. Interaction with CRTAM promotes natural killer (NK) cell cytotoxicity and interferon-gamma (IFN-gamma) secretion by CD8+ T-cells in vitro as well as NK cell-mediated rejection of tumors expressing CADM1 in vivo. In mast cells, may mediate attachment to and promote communication with nerves. CADM1, together with MITF, is essential for development and survival of mast cells in vivo. By interacting with CRTAM and thus promoting the adhesion between CD8+ T-cells and CD8+ dendritic cells, regulates the retention of activated CD8+ T-cell within the draining lymph node. Required for the intestinal retention of intraepithelial CD4+ CD8+ T-cells and, to a lesser extent, intraepithelial and lamina propria CD8+ T-cells and CD4+ T-cells. Interaction with CRTAM promotes the adhesion to gut-associated CD103+ dendritic cells, which may facilitate the expression of gut-homing and adhesion molecules on T-cells and the conversion of CD4+ T-cells into CD4+ CD8+ T-cells. Acts as a synaptic cell adhesion molecule and plays a role in the formation of dendritic spines and in synapse assembly. May be involved in neuronal migration, axon growth, pathfinding, and fasciculation on the axons of differentiating neurons. May play diverse roles in the spermatogenesis including in the adhesion of spermatocytes and spermatids to Sertoli cells and for their normal differentiation into mature spermatozoa. The polypeptide is Cell adhesion molecule 1 (Mus musculus (Mouse)).